Here is a 215-residue protein sequence, read N- to C-terminus: Octanoyltransferase (215 aa).

The BPL/LPL catalytic domain occupies 33–209 (PDTPDQLWLV…QFARKLGYET (177 aa)). Residues 72–79 (RGGQVTYH), 139–141 (SLG), and 152–154 (GLA) each bind substrate. The active-site Acyl-thioester intermediate is the Cys-170.

Belongs to the LipB family.

Its subcellular location is the cytoplasm. It carries out the reaction octanoyl-[ACP] + L-lysyl-[protein] = N(6)-octanoyl-L-lysyl-[protein] + holo-[ACP] + H(+). The protein operates within protein modification; protein lipoylation via endogenous pathway; protein N(6)-(lipoyl)lysine from octanoyl-[acyl-carrier-protein]: step 1/2. Its function is as follows. Catalyzes the transfer of endogenously produced octanoic acid from octanoyl-acyl-carrier-protein onto the lipoyl domains of lipoate-dependent enzymes. Lipoyl-ACP can also act as a substrate although octanoyl-ACP is likely to be the physiological substrate. The polypeptide is Octanoyltransferase (Cellvibrio japonicus (strain Ueda107) (Pseudomonas fluorescens subsp. cellulosa)).